Reading from the N-terminus, the 448-residue chain is UPF0053 protein sll0260 (448 aa).

In terms of domain architecture, CNNM transmembrane spans 2-203 (FSSSVELELF…AQAGMIDEAE (202 aa)). The next 4 helical transmembrane spans lie at 11-31 (FFIFVLVVLNGIFSGSEIAIV), 62-82 (FLSAVQIGITLIGILTGAVGG), 106-126 (LSISLLVGFITYLSLVVGELV), and 142-162 (VAPAMHLVAQLTAPLVYLLGV). CBS domains lie at 222–281 (MTPR…GQKI) and 286–345 (IVQP…NDDE).

This sequence belongs to the UPF0053 family.

The protein resides in the cell membrane. The sequence is that of UPF0053 protein sll0260 from Synechocystis sp. (strain ATCC 27184 / PCC 6803 / Kazusa).